The primary structure comprises 178 residues: UPF0302 protein BCAH187_A1683 (178 aa).

Belongs to the UPF0302 family.

This Bacillus cereus (strain AH187) protein is UPF0302 protein BCAH187_A1683.